The sequence spans 340 residues: Beta-ketoacyl-[acyl-carrier-protein] synthase III (340 aa).

Catalysis depends on residues Cys119 and His260. Residues 261–265 form an ACP-binding region; it reads QANYR. Residue Asn290 is part of the active site.

This sequence belongs to the thiolase-like superfamily. FabH family. Homodimer.

It is found in the cytoplasm. The enzyme catalyses malonyl-[ACP] + acetyl-CoA + H(+) = 3-oxobutanoyl-[ACP] + CO2 + CoA. It functions in the pathway lipid metabolism; fatty acid biosynthesis. Functionally, catalyzes the condensation reaction of fatty acid synthesis by the addition to an acyl acceptor of two carbons from malonyl-ACP. Catalyzes the first condensation reaction which initiates fatty acid synthesis and may therefore play a role in governing the total rate of fatty acid production. Possesses both acetoacetyl-ACP synthase and acetyl transacylase activities. Its substrate specificity determines the biosynthesis of branched-chain and/or straight-chain of fatty acids. This chain is Beta-ketoacyl-[acyl-carrier-protein] synthase III, found in Sulfurovum sp. (strain NBC37-1).